Consider the following 450-residue polypeptide: Tubulin alpha chain (450 aa).

Glutamine 11, glutamate 71, serine 140, glycine 144, threonine 145, threonine 179, asparagine 206, and asparagine 228 together coordinate GTP. Glutamate 71 serves as a coordination point for Mg(2+). The active site involves glutamate 254.

This sequence belongs to the tubulin family. As to quaternary structure, dimer of alpha and beta chains. A typical microtubule is a hollow water-filled tube with an outer diameter of 25 nm and an inner diameter of 15 nM. Alpha-beta heterodimers associate head-to-tail to form protofilaments running lengthwise along the microtubule wall with the beta-tubulin subunit facing the microtubule plus end conferring a structural polarity. Microtubules usually have 13 protofilaments but different protofilament numbers can be found in some organisms and specialized cells. The cofactor is Mg(2+).

It is found in the cytoplasm. The protein resides in the cytoskeleton. It catalyses the reaction GTP + H2O = GDP + phosphate + H(+). Tubulin is the major constituent of microtubules, a cylinder consisting of laterally associated linear protofilaments composed of alpha- and beta-tubulin heterodimers. Microtubules grow by the addition of GTP-tubulin dimers to the microtubule end, where a stabilizing cap forms. Below the cap, tubulin dimers are in GDP-bound state, owing to GTPase activity of alpha-tubulin. This is Tubulin alpha chain from Zymoseptoria tritici (Speckled leaf blotch fungus).